The chain runs to 180 residues: Large ribosomal subunit protein uL5 (180 aa).

It belongs to the universal ribosomal protein uL5 family. Part of the 50S ribosomal subunit; part of the 5S rRNA/L5/L18/L25 subcomplex. Contacts the 5S rRNA and the P site tRNA. Forms a bridge to the 30S subunit in the 70S ribosome.

In terms of biological role, this is one of the proteins that bind and probably mediate the attachment of the 5S RNA into the large ribosomal subunit, where it forms part of the central protuberance. In the 70S ribosome it contacts protein S13 of the 30S subunit (bridge B1b), connecting the 2 subunits; this bridge is implicated in subunit movement. Contacts the P site tRNA; the 5S rRNA and some of its associated proteins might help stabilize positioning of ribosome-bound tRNAs. This chain is Large ribosomal subunit protein uL5, found in Limosilactobacillus fermentum (strain NBRC 3956 / LMG 18251) (Lactobacillus fermentum).